The sequence spans 36 residues: Defensin-like turtle egg white protein TEWP (36 aa).

Gln1 carries the post-translational modification Pyrrolidone carboxylic acid. 3 cysteine pairs are disulfide-bonded: Cys4–Cys30, Cys8–Cys29, and Cys12–Cys24.

It belongs to the beta-defensin family. Monomer. In terms of tissue distribution, detected in egg white (at protein level).

It is found in the secreted. Antibacterial and antiviral peptide. Has strong inhibitory activity towards E.coli and S.typhimurium. Has significant antiviral activity against Chandipura virus. In Caretta caretta (Loggerhead sea turtle), this protein is Defensin-like turtle egg white protein TEWP.